A 78-amino-acid polypeptide reads, in one-letter code: Large ribosomal subunit protein bL28 (78 aa).

The disordered stretch occupies residues 1 to 21 (MSRVCQVTGKRPMVGNNRSHA).

Belongs to the bacterial ribosomal protein bL28 family.

The polypeptide is Large ribosomal subunit protein bL28 (Shewanella halifaxensis (strain HAW-EB4)).